The following is a 74-amino-acid chain: ATP synthase subunit c (74 aa).

2 helical membrane-spanning segments follow: residues 8–28 (FIGVGCMAIGMLGAALGVSNI) and 52–72 (IGAGLAEAMGLFSFVIAMLLI).

The protein belongs to the ATPase C chain family. F-type ATPases have 2 components, F(1) - the catalytic core - and F(0) - the membrane proton channel. F(1) has five subunits: alpha(3), beta(3), gamma(1), delta(1), epsilon(1). F(0) has three main subunits: a(1), b(2) and c(10-14). The alpha and beta chains form an alternating ring which encloses part of the gamma chain. F(1) is attached to F(0) by a central stalk formed by the gamma and epsilon chains, while a peripheral stalk is formed by the delta and b chains.

The protein localises to the cell inner membrane. Functionally, f(1)F(0) ATP synthase produces ATP from ADP in the presence of a proton or sodium gradient. F-type ATPases consist of two structural domains, F(1) containing the extramembraneous catalytic core and F(0) containing the membrane proton channel, linked together by a central stalk and a peripheral stalk. During catalysis, ATP synthesis in the catalytic domain of F(1) is coupled via a rotary mechanism of the central stalk subunits to proton translocation. Its function is as follows. Key component of the F(0) channel; it plays a direct role in translocation across the membrane. A homomeric c-ring of between 10-14 subunits forms the central stalk rotor element with the F(1) delta and epsilon subunits. The sequence is that of ATP synthase subunit c from Rickettsia bellii (strain RML369-C).